Here is a 510-residue protein sequence, read N- to C-terminus: MNLEKFVDELPIPEVAEPVKKNPRQTYYEIAMEEVFLKVHRDLPPTKLWTYNGSLPGPTIKANRNEKVKVKWMNKLPLKHFLPVDHTIHAGHHDEPEVKTVVHLHGGVTPASSDGYPEAWFSRDFEATGPFFEREVYEYPNHQQACTLWYHDHAMALTRLNVYAGLAGFYLISDAFEKSLELPKDEYDIPLMIMDRTFQEDGALFYPSRPNNTPEDSDLPDPSIVPFFCGETILVNGKVWPYLEVEPRKYRFRILNASNTRTYELHLDNDATILQIGSDGGFLPRPVHHQSFSIAPAERFDVIIDFSAYENKTIVLKNSAGCGQDVNPETDANIMQFKVTRPLKGRAAKTLRPIFKPLPPLRPSRADNERTLTLTGTQDKYGRPILLLDNQFWNDPVTENPRLGSVEVWNIVNPTRGTHPIHLHLVQFRVIDRRPFDTDIYQSTGEIVYTGPNEAPPLHEQGYKDTIQAHAGEVIRIIARFVPYSGRYVWHCHILEHEDYDMMRPMDIIQ.

4 Plastocyanin-like domains span residues 45–79 (PTKL…LPLK), 99–174 (KTVV…LISD), 242–317 (YLEV…IVLK), and 372–506 (LTLT…MRPM). The Cu cation site is built by H103, H105, H151, and H153. Cu cation is bound by residues H419, H422, H424, H491, C492, H493, H497, and M502.

It belongs to the multicopper oxidase family. The cofactor is Cu(2+).

It catalyses the reaction 4 hydroquinone + O2 = 4 benzosemiquinone + 2 H2O. Resistant to alkali and organic solvents such as methanol, ethanol and acetone. Resistant to EDTA, which might be explained by the spatial protection of copper ions in the active sites. Inhibited by DMSO. Strongly inhibited by Fe(2+) and DTT. Multicopper oxidase that catalyzes the oxidation of a variety of substrates, including phenolic and non-phenolic compounds. Substrates include 2,6-dimethoxyphenol (2,6-DMP) and the non-phenolic compound 2,2'-azino-bis(3-ethylbenzothiazoline-6-sulfonic acid) (ABTS). Cannot use guaiacol and catechol. In Bacillus stratosphericus, this protein is Laccase.